Consider the following 157-residue polypeptide: Protein snakeskin (157 aa).

At 2–6 (VSVQT) the chain is on the cytoplasmic side. A helical membrane pass occupies residues 7–27 (IATIVVKTFKIVLNIIILVLY). The Extracellular segment spans residues 28-53 (RTGYNGEFLGVGGTWNLNEEKNPDAE). The helical transmembrane segment at 54–74 (IVASGVIVGYLIYTLVQIVTF) threads the bilayer. Residues 75–87 (LFGTTEHKRALSE) lie on the Cytoplasmic side of the membrane. Residues 88-108 (IVMNFVGVFLWIAVGAVALHY) traverse the membrane as a helical segment. The Extracellular segment spans residues 109 to 130 (WGGYQGEHQFQFVFAEKQVGLA). Residues 131-151 (VGALCVINGAIYLLDTALSVI) traverse the membrane as a helical segment. Topologically, residues 152–157 (HFTKEM) are cytoplasmic.

In terms of tissue distribution, expressed in midgut epithelium (at protein level).

It is found in the apicolateral cell membrane. It localises to the cell junction. The protein resides in the septate junction. In terms of biological role, required for assembly of smooth septate junctions (sSJs). May be important for barrier function of the midgut epithelium. This chain is Protein snakeskin, found in Bombyx mori (Silk moth).